The chain runs to 208 residues: FMN-dependent NADH:quinone oxidoreductase 4 (208 aa).

Belongs to the azoreductase type 1 family. As to quaternary structure, homodimer. FMN is required as a cofactor.

The enzyme catalyses 2 a quinone + NADH + H(+) = 2 a 1,4-benzosemiquinone + NAD(+). It catalyses the reaction N,N-dimethyl-1,4-phenylenediamine + anthranilate + 2 NAD(+) = 2-(4-dimethylaminophenyl)diazenylbenzoate + 2 NADH + 2 H(+). Functionally, quinone reductase that provides resistance to thiol-specific stress caused by electrophilic quinones. In terms of biological role, also exhibits azoreductase activity. Catalyzes the reductive cleavage of the azo bond in aromatic azo compounds to the corresponding amines. The polypeptide is FMN-dependent NADH:quinone oxidoreductase 4 (Bacillus cereus (strain ATCC 10987 / NRS 248)).